A 262-amino-acid polypeptide reads, in one-letter code: Pyridoxine 5'-phosphate synthase (262 aa).

Residue N6 coordinates 3-amino-2-oxopropyl phosphate. 8-9 (DH) is a binding site for 1-deoxy-D-xylulose 5-phosphate. R17 lines the 3-amino-2-oxopropyl phosphate pocket. The active-site Proton acceptor is H41. 1-deoxy-D-xylulose 5-phosphate contacts are provided by R43 and H48. Catalysis depends on E68, which acts as the Proton acceptor. Residue T98 participates in 1-deoxy-D-xylulose 5-phosphate binding. Residue H210 is the Proton donor of the active site. 3-amino-2-oxopropyl phosphate is bound by residues G211 and 232–233 (GQ).

This sequence belongs to the PNP synthase family. As to quaternary structure, homooctamer; tetramer of dimers.

It is found in the cytoplasm. It catalyses the reaction 3-amino-2-oxopropyl phosphate + 1-deoxy-D-xylulose 5-phosphate = pyridoxine 5'-phosphate + phosphate + 2 H2O + H(+). The protein operates within cofactor biosynthesis; pyridoxine 5'-phosphate biosynthesis; pyridoxine 5'-phosphate from D-erythrose 4-phosphate: step 5/5. Functionally, catalyzes the complicated ring closure reaction between the two acyclic compounds 1-deoxy-D-xylulose-5-phosphate (DXP) and 3-amino-2-oxopropyl phosphate (1-amino-acetone-3-phosphate or AAP) to form pyridoxine 5'-phosphate (PNP) and inorganic phosphate. This Campylobacter jejuni subsp. jejuni serotype O:23/36 (strain 81-176) protein is Pyridoxine 5'-phosphate synthase.